Here is a 7260-residue protein sequence, read N- to C-terminus: MHRTNEMERKRVFTEICAEALKVEIDDLDETRSWVALGGDSMATIRLIARCEERGMRAKTADVIRCASITELFETIQYLQPSESIDREEVKPEDADAAPFSLWPEYHNATTTEEKQKLLNEVARHCNSTPNDIEDVYPSTPLQEGLMAITSRSPAAYVDRRAFTLPPTVDIARFRAALEALTARTHILRTRIIIDPLSGRSLQVVTRNEVVWREAMTLNDYLEDDRQEGIALGQPLSRCGLIQDKGSDGVEETVFVWTVHHSIYDGWSALQLYRQLAAIYNSEQLSPVVPYTRFVRYLQQQDPDSATQYWRDQLQGEDIMVDWPTLPTATYQPRPRTQFQANILLPDVSGSGLVMMSAVLRGAWALVMAQYSGYSDVIFGVTLSGRNAPVPQVADITAPLITTVPVRIRVDQKLTVAEFLDRIQTQATEMIEYEHTGLQQIMTFLPEYASALDFRNLLIIQPAVERDAYRAFPGISPINIPVEDFDSYGLNVECTLGREQIDIQLNYDEGVITTAALTNVMEQFSTLVRKMCRPDAQATSINEILTLPAQDAEQIKKWNADVPSPVHRCIHDLVQDQVRSQPAAIAVDAWDGRFTYAELASQSMRLAQHLTISHGVGPEQTIGLCMDKSRWAVVAMLAILYAGGAVLPLSGSHPLPRLQGIVEDANTRVILVDASQAARLVGMGRPLVIVDSTIVENLSPAQNEMRSGVTPSNMAWVVYTSGSTGMPKGVVLEHQSLCTSLTAHAKAIGITEHTRTLQFAAYTFDVSIMDTFSTLQAGGCVCVPSEEERLNRLAEAAARLEVNYAELTSTVTEMLSPSQVPSLTTLLLSGEPLKPAVLSIWAKHARVFNSYGPTECSITASNSRQLFHPDEARNIGAPMESLFWVVQSDNHQALCPIGTPGELLIEGPLLARGYLNDETTTNDSFITEPRFPEQIGLERTGRRMYRTGDLVQQNRDGSLLYVGRCGGQQVKIRGQRVDVSEVEHQITQRLPGVKTVAVELVGQGSQLSLMAVIEFAGGTSVTAAPVFEALREQLLHALPQYMVPTLYMPTDQMPINASGKLDRRGLRAQLQALTIAELQEYALNAGPKSAPSTAIEHKLQVLWAETLKVDPACIGREDSFVLLGGDSIAAMRMASLPAAQELHLSVADIFQHARLSDLARELEGRNLNENMQEADPAPFALWDTKQNQRAQRVAILAAQCGVTAGEVEDIIPCTAMQEGLMALTTHQPTAYVGRQVYRLAASIDTQRFQEAWKTLVYHTPILRTRLAVDEASDPQTGGLVQIVVGDGLTWKYSTDLDEYLACDEAEGMALGQPLVRLALVQQKEERFFIFTGHHSVYDGWSASLMFQRLAEIYLHNRIHSSPVPYSRFIRHLLKQDPVSTAGYWSTQLEGEAVVDWPPLPRADYQPRPMHRATHTITLPDNAKISTRGLSKLPHTLRAAWALVMATYAGGQGNRVVFGATVSGRNAPIRGITEMVGPTITTVPVAVQLDTQQTVSQFLEAVQKQAADMIPFEQTGLQIIRKLVPASCHATLELRNLFLVQPLPDGEETDLPGLASLPVTLEGFDTYGLTVQCSLGPDAVTVEMRYDENVIASARVKRIMNCFDHVVNQLYSKRNGAVPLGDLSLLSADDSTTIARWNQTSPERIERCIHHLIEEQITARPDSQAICAWDGDLTYAELNTQATQLSWYLRGLKVDAERMVGICMDKSKFAGVAMLAVLQAGGVVVPLGVNHPPSRNEGIVEDTAIDIILVDEQQRDRLSTMPNVQLVVIEQSLLDTLTIQPIERELPVNVTPNNAAWVIYTSGSTGKPKGVVLQHRALCSSIRAHGARFKMGPHTRMLQFAAHTFDACIQDYFTTLAFGGVVCVPSEHERMSDLSTAVRKLGVTFATLTSTVARLIDPNDVSAMQQLALVGEPVKADVVKRWLDHVTVLNAYGPSECSIHSTCSEPLTDPKQSAIIGTGMGSRVWVADVRDYNRLCPIGVPGELLIEGPILAREYLNDPQKTEKAFITNPAFLEELGISCNSNEGRMYRTGDLVRLDEHGSLTHLGRRDTQIKIRGQRVEVGEIEYQITQQLAGVRSAAVELLEDAGKVRLTVALDFALDSDLRRGPASELGVLLPSPALTTGLQRLRGSLFQVLPIYMVPTAFLPIMDMPLNASGKLDRRAVRALLEKVSFEEQRQYLAVSASESTVTPSTPTESQLRAVWADMLQLPVTQVNIHDNFFQLGGDSVVAMRMVATESARALKLTVADIFQSPRLTDLANLLSSRFLKEEQDEEEYMAEDDPEPFSLWYANEDLQRRHEQLQQIAQDCDVRVSSIQDVYPCTPLQEAMMAITSRQSAAYINRQVFELDDSIDVDRLQSAWRKLAQAVPTLRTRIAMSPGKASTLVQVVVDEEIEWQVSGSLEGYLERDQEQGMALGTPLIRFGLIHKDVSGQRFLVWTAHHSLYDGWSSRLIYQHLADIYHAGRVLDSPASFPRFIRFLAEQDNAEVRSASAKYWSEELEGEVMSNWPPLPHVDYQPRPGREIIKVVPLRQSGPSQVITPANVVRAAWAITMAQYAGHDDVVFAATVSGRNAPVWQVGNIVAPTITTVPVRTHIDWTDNITSFLDTIQKQAADMIPYEHTGLRTIKAIIPPQLGPALDLRNVLVVQTEGEGKTGAAPFPGVEPFSLGAAVDFDSHGLTVDCTVSATNLRVAFRFDETVLPTTHAENILSHFTHVVQQLCDPLLVKGRTLGDMDLVSPGDRTCIFERNDTVDISRWDACIHDLVGKQALAQPNAPAVCAWDGDLSYKELASYASRLAHQLIALGVGPEKKVGLCLDKSRWAVVAMLATLQAGGAIVPLGVSHPFSRVEVMVEDSAAVVILVDEQQHHRLADLPSNIPRVIVDSQSLEKLPPQSAPVTEVSPDNAAWINYTSGSTGAPKGMILEHGGLCTSMRTQSARMHISNKTRALQFSPFTFDVSISDISATLIYGGCVCLPSESDRMNNLAGSIQTMAVNFASLTPTVARLLSPAEVPTLKTLALTGEALKPDVVALWKIVPDVALYNTYGPSEGSVCTCNGPISSPEEAESIGTPMATRHWVTQPHNYHQLSPIGAPGELLIEGPLIARGYLNNPEKTAASFVPPPGFLTKPSGSRIYRTGDLVRQNTDGSFTYLGRRDTQVKIRGQRVEIGEIEHQIVNHLASVQTAVVHLLEAIGLVAVVELREAETVAEIEPAGTIAPSPALCSQFSDLRQALLRVLPDYMAPALFVPVPSIPTNVSGKLDRRAVHELLMSLPTDNLGRWTAEQENMPKAILQPATEMEKMLQELWARMLKIPADNVSPQDDFFRLGGDSVTAMRMVATATRTSRHLRLVVTDIFQHPRLSELAQVLEERVQKDLEQRDIQSTEPIDPEPFALFADGSDLDAQGREQRLAAVAEQCSVAVEQVQDVYPCTPLQEGLLANTSRQQAAYVSRQSYVLSNNIDLARFKAAWEALAKAAPILRTRIVIGAEGSCQVVVKGPIEWLHHSGALEDYIQQDKAREMGLGQPLARYAIVQELSGEQFFVWTAHHSMYDGWTVRLLCQELINLYNREDHVPRPVPYTRFIRYLYEINRAGSLEFWKQQLEGDDVEADWPRLPHVGYEPRPRSTLSVNIADPGNDESSGIVIANILRAAWGLVMAQFSGHNDIVYAANVSGRTAPVPGVTDIIGPTIATVPVRMHFNPRALMTVESFLHGVQTQSQQMIDHEQTGLIAMRNHPNLQLRNLLVIQPADEGDTVLDFPGIEAVPSAVEDFDSYGVNIECVLGMTIRVQARFDDHIVAATYMKRVLDQFAYIVEQLCDPRLRALPLQQLNLLSPNDQQQISSWNAAAPESVEQCVHEMVEEQAMAHPTKLAVWAWDGKFTYQELAHLAQLLADQLVSLGIGPERMVGVCMDKSKWAAVAFLAILKAGGVVVPLGVSHPIRRIETILNDTMSDLVLVDAKHCQRLSVEGLLRQRLLVVDDKLQQHGSSRPRAGQQAKPITPDHAAWVIYTSGTTGLPKGAVLDHRALSSSIRAHGTRYKFGPQTRKLQYSAHLFDGTIEDYFTTLSWGGLCCVPSEDDRLDMRRLTAFMRETEVNALATTYTVAGLLTPEEVPSLQTLVLGGEPATVEVTDTWRSKVDLFNCYGPSECTVFSSAAGPRVAVAELHNIGHPIGTRLWVVNPDNPGSLCPVGAPGELLIEGPQLARGYLNDEAKTRTAFLTDLEFMRQFKIPPSTRVYRSGDIVRQKDDGSFVYVARRNTMQVKIRGQRVEVGEIEHQVGLHLAETRAVAVELLKQGVHGLPVLVAVVDFADNSQYRLADGDQKPTPKEELLPPTPAAQQAFTKLQVALSQVLPSHMIPSIYLPVTQLPRNISGKLDRRALRELLDQLSYEAIHQYMDIDGGEKAAPATAMERTLQSLWAQTLGMDIDRIGAHDNFFQLGGDSVAAMRLAAIVQQQEQLQLTVGDILSHPCLSDLANLLADGAPTEGTTETDPEPFSLWCTVPDEDLPTIAVKLGVAVEQIEDIYPATPLQEGFIAVTARQSAAYISRQVYKLSATLLDLDRFKASWETLVNTTPILRTRLSIGRDGHAVQVVVRDSIGWRYGTDLSSYVAQDREEGMRLDEPLMRYAIITEPTSGSCYFVWTAHHSIYDAWTIRAISKSLAEIYTSTSPHSIPQPTASFSRFIRYLTNTDTDAIKDFWHEQLAGDVVADWPPLPQNDYQSLPRGRIQKTIKIPERSSGILESTTLRGAWSIVMSQYAGSSDVVFAATVSGRNAPVPQINDIAGPTLTTVPVRVSVDSSLSVNQFLQSIQQQSTDMIPYEQTGLQRIKASLPEANQSALNLRNLLVIQLAAEAESNTLALPGWEAQPAPFEDFGSFGLQIECTPIPGSHAIDVNIQYDEKVISTTAVTRVAEHFVHVAEQLFNPGLINSALTEIQLQLSSEHKDVMLRQNTHVPPYLNRCIQEMVYERAALQPNAPAICAWDGNWTYAEVTDLAASFASYLSTELQIGPTQMVGVCMDKSKWAVVAMLAILCAGGTVVPLGVNHPLSRIQVMAQDTGLGVILVDNKQRERLFDLNHRLITVDAQHIQGLPVLGKQERTSMTQKTGVTPDDIAWIIYTSGSTGIPKGVMLEHRALATSMEAHGSTFGFGTHTRILQFAAHTFDATIQDMFTTLYKGGCVCIPSEYDRVNRLTESMASMSVNCATLTSTVASLLAPEELPSMQTIILVGEPVTPAAVALWLPHATVLNAYGPSECSIHSSCSDPITDPALAPNIGRPLATNFWVVDPNNYHSLRPIGAPGELLIEGPIQARGYLNDIDKTNAAFVIDPDFMKQLGLSGSQRRLYRTGDLVRQNDNGTLTHMGRRDLQVKIRGQRVEVGEVEYQIQRKLPSARTVAVEPLQHGDKDKHITLIAIMDLSDRAVTDELNAAKAPEPLPVTASLQATFHDLRNSLLQVLPAYMVPAAYLPVDRMPMNASNKLDRRAIRELITHHSLEDLQQYLGGGTDDNVKTAPRTVMEQQVHALWVEVLGLSEDAVGVYDNFLQLGGDSLTAMRIVAAAGQTGEVRVSVEDIFMHPTVADLALVLSERGSSDRAVEQEQEDPAPYQLWTEQNNFPADQIEENLEAIAAQCAVDRALIEDVYPCTPLQAGLMAITARQPAAYVSRQVYTMSSSIVDRATFQKAWQQLAAGTDILRTRIVMAPDSSSQALQVVVRDTIHWELGTNLDEYLRRDSERGMALGEPLVRYGIVEEPSGKSYFIWTAHHALYDGWTLGALSKRLGDIYQNRALSTQSVPYSRFIRYLQHGRSSLESSASYWREQLQGDAMANWPRRPALDYQPMPRHNLQRTISLGSSQTLVTTSTILRAAWALVIAQYAGHNDVVFAATVSGRSAPVAGIADIPAPTITTVPVRIRVDGNRSVADYLQAVQRQAIDMIYYEHTGLQTIKALVPDLASTLDAGSLMVIQPTDQSAMESGLDFPGLDMVPMPIAPFNSHGVTLECKLGAQDVTLDIHYDSNIIAPEQLSLVIDYFASLVLRLGNPAATSSPVADLLAVSEKDERQIRAWNSTVPPRLDKCIHEMVQEQVARTPGEIAIQAWDGQLTYREFHDLAASLAHHLAALGVGPETLVGVCMAKSKWGAVAMLAIMQAGGAIMPLGVSQPVARIQNILETSQAAFILVDEEQMDRLNQLSTPGQTPKLIFVEDLLMEIPSYTQPPATDVTPDNASWAIFTSGSTGTPKGVIIEHGTMSTSLDEQGRWLGLSQETRFLQFASYTFDNVITDTFATTSFGGCVCIPSESGRMDRLEEVMVEMKVNTAMLTSTVAQQLSPTQLPLMQKLILTGEPVRPDVVRTWLDHAEIYNAYGPTEGSMSTCTRPYTNAFEASNIGHPLATRLWVVQPDNPHLLSAIGAPGELYIEGPFLARGYLNDPVKTDALFLMDPPFTQRLGLTGRRVYRTGDLVQQNEDGTLIHLGRHDSQVKIRGQRVEISEIEHQITQHLPEASTVAVFILDDNPITLVAAVEFNMKSPHRLGPHSAFKGLLAPTVAMRVDFTRLYGALSQVLPIYMVPTVFIPMHEMSRNLSGKLDRRLVQTLLKEIPTTELRRYRLGEGPKIAPSTAMERQLQSIWSKALDLPEDQVGAHDNFFHIGGDSLVAMRIIAIARAQKLKLTVADLFKYPCLSEVAQVVEDRVAASSITLAVDEEPIAPSPFSLIAAENIEIYLQRIASRMPGCRAQDIVDILPTTDFQALTVAEALTTPGTANFAHFFLDGDGSCDVEALRKSCLQLIEAMPELRTAYVFDQGRLLQVVLRVYEPEIKILQTNDATMEEVTSDLISKQMFQAPHLGQPFTVITIIEESASSRHRVVLRLTHAEYDAVSMQSIWRQLRALYEGTTLKPRPTFASFLYSQRQKITTQTYNYWRTLLDESTMTPLSTPTPMPTSTIGHYPSKVAQLRPCRVHINRSSVEGITSAVFIKTAWAIALSRLSNRQDIIFADTVSSRGTVDESLMEATGCCVTLLPVRVKLTPETSMQDVLLELRTQQVQSLERAQLGFREILHECTNWPTSTRFTSAINCISQGGNGAFTMRGTNYWLSNFQANNATWTVDLGVTAVMHDNGDVDLRMAYLPTRISEDAAYKYLNTLQDTLQAILDSPGLLVSNFLSRALGGSLGDRKGASDPKIEVIEPEQEPQPLESTDKMTYLDLKKTPEWEEVLRGRRGIVSPGRTSLSFSQRGGDLLDALYLSSLQKDADGGRYISPMALLEGSRCEEAEKSASVTSSERRLATI.

The region spanning 4-80 is the Carrier 1 domain; that stretch reads TNEMERKRVF…ELFETIQYLQ (77 aa). Ser41 bears the O-(pantetheine 4'-phosphoryl)serine mark. Residues 134-549 are condensation 1; the sequence is EDVYPSTPLQ…SINEILTLPA (416 aa). Residues 575–965 are adenylation 1; sequence QDQVRSQPAA…DGSLLYVGRC (391 aa). The 77-residue stretch at 1090 to 1166 folds into the Carrier 2 domain; the sequence is APSTAIEHKL…DLARELEGRN (77 aa). O-(pantetheine 4'-phosphoryl)serine is present on Ser1127. The tract at residues 1208–1628 is condensation 2; that stretch reads EDIIPCTAMQ…LGDLSLLSAD (421 aa). An adenylation 2 region spans residues 1653–2054; sequence EEQITARPDS…GRRDTQIKIR (402 aa). The 77-residue stretch at 2188 to 2264 folds into the Carrier 3 domain; it reads TPSTPTESQL…DLANLLSSRF (77 aa). Residue Ser2225 is modified to O-(pantetheine 4'-phosphoryl)serine. The condensation 3 stretch occupies residues 2314-2719; that stretch reads QDVYPCTPLQ…THVVQQLCDP (406 aa). Residues 2763–3156 form an adenylation 3 region; sequence KQALAQPNAP…GRRDTQVKIR (394 aa). Residues 3287 to 3365 form the Carrier 4 domain; the sequence is QPATEMEKML…ELAQVLEERV (79 aa). At Ser3324 the chain carries O-(pantetheine 4'-phosphoryl)serine. Residues 3417–3831 are condensation 4; it reads VQDVYPCTPL…LLSPNDQQQI (415 aa). The interval 3851-4248 is adenylation 4; it reads EEQAMAHPTK…SFVYVARRNT (398 aa). A Carrier 5 domain is found at 4394-4471; sequence APATAMERTL…DLANLLADGA (78 aa). At Ser4431 the chain carries O-(pantetheine 4'-phosphoryl)serine. Residues 4510–4910 form a condensation 5 region; the sequence is EDIYPATPLQ…HFVHVAEQLF (401 aa). The adenylation 5 stretch occupies residues 4955–5357; the sequence is ERAALQPNAP…GRRDLQVKIR (403 aa). The 78-residue stretch at 5496 to 5573 folds into the Carrier 6 domain; that stretch reads APRTVMEQQV…DLALVLSERG (78 aa). O-(pantetheine 4'-phosphoryl)serine is present on Ser5533. Residues 5622–6043 are condensation 6; sequence EDVYPCTPLQ…AVSEKDERQI (422 aa). The segment at 6063–6460 is adenylation 6; the sequence is QEQVARTPGE…GRHDSQVKIR (398 aa). Positions 6592 to 6668 constitute a Carrier 7 domain; sequence APSTAMERQL…EVAQVVEDRV (77 aa). Position 6629 is an O-(pantetheine 4'-phosphoryl)serine (Ser6629). Residues 6718–7133 form a condensation 7 region; sequence LPTTDFQALT…ILDSPGLLVS (416 aa). A disordered region spans residues 7241–7260; sequence CEEAEKSASVTSSERRLATI.

The protein belongs to the NRP synthetase family.

It participates in antifungal biosynthesis. Nonribosomal peptide synthetase; part of the gene cluster that mediates the biosynthesis of echinocandin B, a fungal lipidated cyclic hexapeptide that acts as an antifungal agent. Linoleoyl-AMP, produced by the fatty-acyl-AMP ligase ecdI, is transferred to the initiation carrier domain (T0) of ecdA. The linoleoyl-S-phosphopantetheinyl-T0 is sequentially extended with L-ornithine, L-threonine, L-proline, L-homotyrosine, L-threonine, and 4R-methyl-L-proline to form the linear hexapeptide. Thereafter, the terminal condensation (C7) performs macrocyclization of the NRPS product and the cyclic scaffold is released from ecdA. All six of the amino acid residues are hydroxylated, including 4R,5R-dihydroxy-L-ornithine, 4R-hydroxyl-L-proline, 3S,4S-dihydroxy-L-homotyrosine, and 3S-hydroxyl-4S-methyl-L-prolin. In the pathway, all the hydroxylation reactions are proposed to occur following completion of the cyclic peptide, so the unhydroxylated precursor produced by ecdA will undergo six rounds of hydroxylation. Five hydroxylase genes (ecdG, ecdH, ecdK, htyE and htyF) are embedded within the echinocandin B (ecd) and L-homotyrosine (hty) clusters. The protein is Nonribosomal peptide synthetase ecdA of Aspergillus rugulosus (Emericella rugulosa).